A 367-amino-acid polypeptide reads, in one-letter code: MQPESSQREETPSLLWGLDPVFLAFAKLYIGDILDLKESRQVPGVFFYNGHPIKQVEILGTVIGRREKDAFYSYGVDDGTGVINCICWKKSNNAAPSSAAPALGVLNLTSQLKKLQETIEQKTKIEIGDIVQIRGYVHTYREEREIRVTTYYKVDDPVCNIQIARMLELPSIYRKVYDQPFCSPALEQERAFSDPSALDLASLTRLLSERAKEFLAENKVQTFYQQELEIVESLLSLANQPVIHGAGPEQGDSKSDTTSKAIHSIFKNAIQLLQEKGFVFQKDDGFDKLYYVTREDKELHRKIHHIIQEDCQKPNHAEKGCHFQHILACARLSVSPDLSEGVLQQVLELLEDQSDIISTTEHYYTAF.

The segment at residues valine 56–valine 154 is a DNA-binding region (OB). Winged helix-turn-helix (wHTH) regions lie at residues arginine 190 to arginine 294 and glutamate 295 to phenylalanine 367.

Belongs to the STN1 family. As to quaternary structure, component of the CST complex, composed of TEN1, CTC1 and STN1. Interacts with TEN1 and CTC1; the interaction is direct. Interacts with ACD/TPP1.

It is found in the nucleus. Its subcellular location is the chromosome. The protein localises to the telomere. Component of the CST complex, a complex that binds to single-stranded DNA and is required to protect telomeres from DNA degradation. The CST complex binds single-stranded DNA with high affinity in a sequence-independent manner, while isolated subunits bind DNA with low affinity by themselves. In addition to telomere protection, the CST complex has probably a more general role in DNA metabolism at non-telomeric sites. The sequence is that of CST complex subunit STN1 from Ailuropoda melanoleuca (Giant panda).